A 305-amino-acid chain; its full sequence is NAD-dependent protein deacylase sirtuin-5, mitochondrial (305 aa).

The N-terminal 32 residues, Met-1–Pro-32, are a transit peptide targeting the mitochondrion. In terms of domain architecture, Deacetylase sirtuin-type spans Ser-33–Glu-303. Gly-54–Trp-73 is a binding site for NAD(+). 2 residues coordinate substrate: Tyr-98 and Arg-101. NAD(+) is bound at residue Gln-136 to Asp-139. His-154 serves as the catalytic Proton acceptor. Residues Cys-162, Cys-165, Cys-203, and Cys-208 each coordinate Zn(2+). NAD(+)-binding positions include Gly-245–Ser-247, Asn-271–Glu-273, and Cys-289.

Belongs to the sirtuin family. Class III subfamily. Zn(2+) is required as a cofactor.

Its subcellular location is the mitochondrion. It localises to the cytoplasm. The protein resides in the cytosol. The protein localises to the nucleus. The enzyme catalyses N(6)-malonyl-L-lysyl-[protein] + NAD(+) + H2O = 2''-O-malonyl-ADP-D-ribose + nicotinamide + L-lysyl-[protein]. It catalyses the reaction N(6)-succinyl-L-lysyl-[protein] + NAD(+) + H2O = 2''-O-succinyl-ADP-D-ribose + nicotinamide + L-lysyl-[protein]. It carries out the reaction N(6)-glutaryl-L-lysyl-[protein] + NAD(+) + H2O = 2''-O-glutaryl-ADP-D-ribose + nicotinamide + L-lysyl-[protein]. NAD-dependent lysine demalonylase, desuccinylase and deglutarylase that specifically removes malonyl, succinyl and glutaryl groups on target proteins. Has weak NAD-dependent protein deacetylase activity; however this activity may not be physiologically relevant in vivo. This is NAD-dependent protein deacylase sirtuin-5, mitochondrial (sirt5) from Danio rerio (Zebrafish).